The sequence spans 494 residues: Lysine--tRNA ligase (494 aa).

Mg(2+)-binding residues include E407 and E414.

The protein belongs to the class-II aminoacyl-tRNA synthetase family. In terms of assembly, homodimer. Mg(2+) is required as a cofactor.

It is found in the cytoplasm. It catalyses the reaction tRNA(Lys) + L-lysine + ATP = L-lysyl-tRNA(Lys) + AMP + diphosphate. The sequence is that of Lysine--tRNA ligase from Lactococcus lactis subsp. cremoris (strain MG1363).